Here is a 355-residue protein sequence, read N- to C-terminus: S-adenosylmethionine:tRNA ribosyltransferase-isomerase (355 aa).

This sequence belongs to the QueA family. As to quaternary structure, monomer.

The protein localises to the cytoplasm. The enzyme catalyses 7-aminomethyl-7-carbaguanosine(34) in tRNA + S-adenosyl-L-methionine = epoxyqueuosine(34) in tRNA + adenine + L-methionine + 2 H(+). The protein operates within tRNA modification; tRNA-queuosine biosynthesis. Its function is as follows. Transfers and isomerizes the ribose moiety from AdoMet to the 7-aminomethyl group of 7-deazaguanine (preQ1-tRNA) to give epoxyqueuosine (oQ-tRNA). The protein is S-adenosylmethionine:tRNA ribosyltransferase-isomerase of Burkholderia orbicola (strain MC0-3).